The primary structure comprises 295 residues: 3-methyl-2-oxobutanoate hydroxymethyltransferase (295 aa).

Positions 53 and 92 each coordinate Mg(2+). Residues 53–54 (DS), Asp-92, and Lys-122 contribute to the 3-methyl-2-oxobutanoate site. Mg(2+) is bound at residue Glu-124. Glu-191 acts as the Proton acceptor in catalysis.

It belongs to the PanB family. In terms of assembly, homodecamer; pentamer of dimers. Mg(2+) serves as cofactor.

Its subcellular location is the cytoplasm. It carries out the reaction 3-methyl-2-oxobutanoate + (6R)-5,10-methylene-5,6,7,8-tetrahydrofolate + H2O = 2-dehydropantoate + (6S)-5,6,7,8-tetrahydrofolate. It participates in cofactor biosynthesis; (R)-pantothenate biosynthesis; (R)-pantoate from 3-methyl-2-oxobutanoate: step 1/2. Catalyzes the reversible reaction in which hydroxymethyl group from 5,10-methylenetetrahydrofolate is transferred onto alpha-ketoisovalerate to form ketopantoate. The protein is 3-methyl-2-oxobutanoate hydroxymethyltransferase of Koribacter versatilis (strain Ellin345).